A 601-amino-acid polypeptide reads, in one-letter code: Abscisic acid cluster transcription factor abl7 (601 aa).

The segment at residues 13-40 (CDECRRRKLKCDRVRPQCGTCALSESEC) is a DNA-binding region (zn(2)-C6 fungal-type).

It localises to the nucleus. Transcription factor that regulates the expression of the gene cluster that mediates the biosynthesis of abscisic acid (ABA), a phytohormone that acts antagonistically toward salicylic acid (SA), jasmonic acid (JA) and ethylene (ETH) signaling, to impede plant defense responses. This chain is Abscisic acid cluster transcription factor abl7, found in Leptosphaeria maculans (strain JN3 / isolate v23.1.3 / race Av1-4-5-6-7-8) (Blackleg fungus).